The following is a 513-amino-acid chain: Putative thymidine phosphorylase (513 aa).

This sequence belongs to the thymidine/pyrimidine-nucleoside phosphorylase family. Type 2 subfamily.

It catalyses the reaction thymidine + phosphate = 2-deoxy-alpha-D-ribose 1-phosphate + thymine. The protein is Putative thymidine phosphorylase of Rhodopseudomonas palustris (strain BisA53).